The primary structure comprises 341 residues: Protein pelota homolog (341 aa).

This sequence belongs to the eukaryotic release factor 1 family. Pelota subfamily. In terms of assembly, monomer. It depends on a divalent metal cation as a cofactor.

The protein localises to the cytoplasm. May function in recognizing stalled ribosomes, interact with stem-loop structures in stalled mRNA molecules, and effect endonucleolytic cleavage of the mRNA. May play a role in the release non-functional ribosomes and degradation of damaged mRNAs. Has endoribonuclease activity. In Methanoregula boonei (strain DSM 21154 / JCM 14090 / 6A8), this protein is Protein pelota homolog.